The chain runs to 442 residues: tRNA-2-methylthio-N(6)-dimethylallyladenosine synthase (442 aa).

Positions 5–122 (KRIFIKTFGC…LPDMIESKRR (118 aa)) constitute an MTTase N-terminal domain. [4Fe-4S] cluster contacts are provided by C14, C51, C85, C159, C163, and C166. The region spanning 145–377 (RVEGAAAFLS…QALNEAQGKA (233 aa)) is the Radical SAM core domain. Residues 380–442 (ASMVGSIQRV…LSHTLRGELV (63 aa)) form the TRAM domain.

This sequence belongs to the methylthiotransferase family. MiaB subfamily. In terms of assembly, monomer. Requires [4Fe-4S] cluster as cofactor.

The protein resides in the cytoplasm. The enzyme catalyses N(6)-dimethylallyladenosine(37) in tRNA + (sulfur carrier)-SH + AH2 + 2 S-adenosyl-L-methionine = 2-methylsulfanyl-N(6)-dimethylallyladenosine(37) in tRNA + (sulfur carrier)-H + 5'-deoxyadenosine + L-methionine + A + S-adenosyl-L-homocysteine + 2 H(+). Functionally, catalyzes the methylthiolation of N6-(dimethylallyl)adenosine (i(6)A), leading to the formation of 2-methylthio-N6-(dimethylallyl)adenosine (ms(2)i(6)A) at position 37 in tRNAs that read codons beginning with uridine. The protein is tRNA-2-methylthio-N(6)-dimethylallyladenosine synthase of Methylobacillus flagellatus (strain ATCC 51484 / DSM 6875 / VKM B-1610 / KT).